Consider the following 427-residue polypeptide: Adenylosuccinate synthetase (427 aa).

GTP-binding positions include 12–18 and 40–42; these read GDEGKGK and GHT. Aspartate 13 functions as the Proton acceptor in the catalytic mechanism. 2 residues coordinate Mg(2+): aspartate 13 and glycine 40. IMP contacts are provided by residues 13–16, 38–41, threonine 128, arginine 142, glutamine 223, threonine 238, and arginine 302; these read DEGK and NAGH. Catalysis depends on histidine 41, which acts as the Proton donor. 298–304 contributes to the substrate binding site; that stretch reads TTTGRNR. GTP contacts are provided by residues arginine 304, 330–332, and 412–414; these read KLD and GVG.

It belongs to the adenylosuccinate synthetase family. In terms of assembly, homodimer. Mg(2+) is required as a cofactor.

The protein resides in the cytoplasm. The catalysed reaction is IMP + L-aspartate + GTP = N(6)-(1,2-dicarboxyethyl)-AMP + GDP + phosphate + 2 H(+). The protein operates within purine metabolism; AMP biosynthesis via de novo pathway; AMP from IMP: step 1/2. Its function is as follows. Plays an important role in the de novo pathway of purine nucleotide biosynthesis. Catalyzes the first committed step in the biosynthesis of AMP from IMP. The protein is Adenylosuccinate synthetase of Thermobifida fusca (strain YX).